Here is a 317-residue protein sequence, read N- to C-terminus: Pseudouridine-5'-phosphate glycosidase 1 (317 aa).

Catalysis depends on Glu40, which acts as the Proton donor. Substrate contacts are provided by Lys101 and Val121. Asp153 provides a ligand contact to Mn(2+). Ser155–Asp157 contacts substrate. Lys174 serves as the catalytic Nucleophile.

The protein belongs to the pseudouridine-5'-phosphate glycosidase family. Homotrimer. The cofactor is Mn(2+).

The catalysed reaction is D-ribose 5-phosphate + uracil = psi-UMP + H2O. Functionally, catalyzes the reversible cleavage of pseudouridine 5'-phosphate (PsiMP) to ribose 5-phosphate and uracil. Functions biologically in the cleavage direction, as part of a pseudouridine degradation pathway. In Rhizobium johnstonii (strain DSM 114642 / LMG 32736 / 3841) (Rhizobium leguminosarum bv. viciae), this protein is Pseudouridine-5'-phosphate glycosidase 1.